A 95-amino-acid polypeptide reads, in one-letter code: Aspartyl/glutamyl-tRNA(Asn/Gln) amidotransferase subunit C (95 aa).

Belongs to the GatC family. As to quaternary structure, heterotrimer of A, B and C subunits.

The enzyme catalyses L-glutamyl-tRNA(Gln) + L-glutamine + ATP + H2O = L-glutaminyl-tRNA(Gln) + L-glutamate + ADP + phosphate + H(+). The catalysed reaction is L-aspartyl-tRNA(Asn) + L-glutamine + ATP + H2O = L-asparaginyl-tRNA(Asn) + L-glutamate + ADP + phosphate + 2 H(+). Its function is as follows. Allows the formation of correctly charged Asn-tRNA(Asn) or Gln-tRNA(Gln) through the transamidation of misacylated Asp-tRNA(Asn) or Glu-tRNA(Gln) in organisms which lack either or both of asparaginyl-tRNA or glutaminyl-tRNA synthetases. The reaction takes place in the presence of glutamine and ATP through an activated phospho-Asp-tRNA(Asn) or phospho-Glu-tRNA(Gln). The polypeptide is Aspartyl/glutamyl-tRNA(Asn/Gln) amidotransferase subunit C (Bartonella quintana (strain Toulouse) (Rochalimaea quintana)).